The primary structure comprises 331 residues: L-lactate dehydrogenase A chain (331 aa).

Residues 29-57 (GMVG…MEDK) and Arg-98 contribute to the NAD(+) site. Substrate is bound by residues Arg-105, Asn-137, and Arg-168. Asn-137 lines the NAD(+) pocket. His-192 acts as the Proton acceptor in catalysis. Thr-247 provides a ligand contact to substrate.

This sequence belongs to the LDH/MDH superfamily. LDH family. As to quaternary structure, homotetramer.

The protein localises to the cytoplasm. It catalyses the reaction (S)-lactate + NAD(+) = pyruvate + NADH + H(+). Its pathway is fermentation; pyruvate fermentation to lactate; (S)-lactate from pyruvate: step 1/1. Its function is as follows. Interconverts simultaneously and stereospecifically pyruvate and lactate with concomitant interconversion of NADH and NAD(+). The polypeptide is L-lactate dehydrogenase A chain (ldha) (Paranotothenia magellanica (Maori cod)).